We begin with the raw amino-acid sequence, 183 residues long: Dual-action ribosomal maturation protein DarP (183 aa).

A disordered region spans residues 1–27 (MSSHSQEPVGEENFDDSEYDRPSKSQV). A compositionally biased stretch (acidic residues) spans 9–18 (VGEENFDDSE).

This sequence belongs to the DarP family.

It localises to the cytoplasm. Functionally, member of a network of 50S ribosomal subunit biogenesis factors which assembles along the 30S-50S interface, preventing incorrect 23S rRNA structures from forming. Promotes peptidyl transferase center (PTC) maturation. In Bordetella parapertussis (strain 12822 / ATCC BAA-587 / NCTC 13253), this protein is Dual-action ribosomal maturation protein DarP.